The primary structure comprises 357 residues: MADAATIAKLEEGFKKLEAATDCKSLLKKYLTKSVFDQLKDKKTSLGATLLDVIQSGVENLDSGVGVYAPDAEAYTLFAPLFDPIIEDYHKGFKQTDKHPNKDFGDVNQFVNVDPDGKFVISTRVRCGRSMEGYPFNPCLTEAQYKEMESKVSSTLSNLEGELKGTYFPLTGMTKEVQQKLIDDHFLFKEGDRFLQAANACRYWPTGRGIYHNDNKTFLVWCNEEDHLRIISMQMGGDLGQVYRRLVSAVNEIEKRVPFSHHDRLGFLTFCPTNLGTTVRASVHIKLPKLAANREKLEEVAGKYSLQVRGTRGEHTEAEGGVYDISNKRRMGLTEYQAVKEMQDGILELIKIEKEMQ.

N-acetylalanine is present on alanine 2. The 83-residue stretch at 9 to 91 (KLEEGFKKLE…FDPIIEDYHK (83 aa)) folds into the Phosphagen kinase N-terminal domain. 64–68 (GVGVY) contributes to the L-arginine binding site. The Phosphagen kinase C-terminal domain occupies 119-356 (FVISTRVRCG…LELIKIEKEM (238 aa)). Residues 122 to 126 (STRVR) and histidine 185 contribute to the ATP site. Glutamate 225 is an L-arginine binding site. Arginine 229 serves as a coordination point for ATP. Residue cysteine 271 participates in L-arginine binding. ATP contacts are provided by residues 280-284 (RASVH) and 309-314 (RGTRGE). Position 314 (glutamate 314) interacts with L-arginine.

The protein belongs to the ATP:guanido phosphotransferase family.

The enzyme catalyses L-arginine + ATP = N(omega)-phospho-L-arginine + ADP + H(+). The chain is Arginine kinase from Callinectes sapidus (Blue crab).